The sequence spans 687 residues: Polyphosphate kinase (687 aa).

Asn45 serves as a coordination point for ATP. Residues Arg375 and Arg405 each contribute to the Mg(2+) site. His435 serves as the catalytic Phosphohistidine intermediate. The ATP site is built by Tyr472, Arg568, and His596.

Belongs to the polyphosphate kinase 1 (PPK1) family. Mg(2+) is required as a cofactor. In terms of processing, an intermediate of this reaction is the autophosphorylated ppk in which a phosphate is covalently linked to a histidine residue through a N-P bond.

It carries out the reaction [phosphate](n) + ATP = [phosphate](n+1) + ADP. Functionally, catalyzes the reversible transfer of the terminal phosphate of ATP to form a long-chain polyphosphate (polyP). In Burkholderia cenocepacia (strain HI2424), this protein is Polyphosphate kinase.